The sequence spans 643 residues: Inner kinetochore subunit cnp3 (643 aa).

2 disordered regions span residues 55 to 209 (SIHL…AFPD) and 224 to 386 (SIKD…QSDS). 2 stretches are compositionally biased toward low complexity: residues 85–97 (AASD…SSSD) and 104–125 (DIPS…GSSG). A compositionally biased stretch (basic and acidic residues) spans 166-185 (DFSRIKASPDRKKFEPRRST). Polar residues-rich tracts occupy residues 235–261 (YIQT…PSKQ), 295–304 (LNRSLANNSQ), and 313–322 (KPLQESSINS). Basic residues-rich tracts occupy residues 332 to 341 (VKRKRGRPRK) and 360 to 370 (GAKKPAIRNAK). The segment at residues 333 to 345 (KRKRGRPRKNKLE) is a DNA-binding region (a.T hook).

Belongs to the CENP-C/MIF2 family. Component of the inner kinetochore constitutive centromere-associated network (CCAN) (also known as central kinetochore Sim4 complex in fission yeast), which is composed of at least cnl2, cnp3, cnp20, fta1, fta2, fta3, fta4, fta6, fta7, mal2, mhf1, mhf2, mis6, mis15, mis17, sim4 and wip1.

It is found in the nucleus. Its subcellular location is the nucleoplasm. Component of the kinetochore, a multiprotein complex that assembles on centromeric DNA and attaches chromosomes to spindle microtubules, mediating chromosome segregation and sister chromatid segregation during meiosis and mitosis. Component of the inner kinetochore constitutive centromere-associated network (CCAN), which serves as a structural platform for outer kinetochore assembly. The polypeptide is Inner kinetochore subunit cnp3 (cnp3) (Schizosaccharomyces pombe (strain 972 / ATCC 24843) (Fission yeast)).